We begin with the raw amino-acid sequence, 476 residues long: Sulfate adenylyltransferase subunit 1 (476 aa).

A tr-type G domain is found at 24–238 (KSLLRFLTCG…ELLEYVDIDR (215 aa)). A G1 region spans residues 33–40 (GSVDDGKS). Position 33–40 (33–40 (GSVDDGKS)) interacts with GTP. The G2 stretch occupies residues 91-95 (GITID). The tract at residues 112-115 (DTPG) is G3. GTP contacts are provided by residues 112–116 (DTPGH) and 167–170 (NKMD). Positions 167–170 (NKMD) are G4. The tract at residues 205 to 207 (SAL) is G5.

Belongs to the TRAFAC class translation factor GTPase superfamily. Classic translation factor GTPase family. CysN/NodQ subfamily. In terms of assembly, heterodimer composed of CysD, the smaller subunit, and CysN.

The enzyme catalyses sulfate + ATP + H(+) = adenosine 5'-phosphosulfate + diphosphate. Its pathway is sulfur metabolism; hydrogen sulfide biosynthesis; sulfite from sulfate: step 1/3. With CysD forms the ATP sulfurylase (ATPS) that catalyzes the adenylation of sulfate producing adenosine 5'-phosphosulfate (APS) and diphosphate, the first enzymatic step in sulfur assimilation pathway. APS synthesis involves the formation of a high-energy phosphoric-sulfuric acid anhydride bond driven by GTP hydrolysis by CysN coupled to ATP hydrolysis by CysD. This Vibrio cholerae serotype O1 (strain M66-2) protein is Sulfate adenylyltransferase subunit 1.